The chain runs to 422 residues: Choline monooxygenase, chloroplastic (422 aa).

A chloroplast-targeting transit peptide spans 1–47 (MMTTLTATVPEFLPPSLKSTRGYFNSHSEFGVSISKFSRRRFHNPTR). Residues 96–203 (WQAVGYSDQI…VAVWGPFVLL (108 aa)) form the Rieske domain. [2Fe-2S] cluster-binding residues include Cys138, His140, Cys157, and His160. Fe cation-binding residues include His269 and His274.

The protein belongs to the choline monooxygenase family. [2Fe-2S] cluster is required as a cofactor. Requires Fe cation as cofactor. The cofactor is Mg(2+).

It is found in the plastid. The protein resides in the chloroplast stroma. The enzyme catalyses choline + 2 reduced [2Fe-2S]-[ferredoxin] + O2 + 2 H(+) = betaine aldehyde hydrate + 2 oxidized [2Fe-2S]-[ferredoxin] + H2O. Its pathway is amine and polyamine biosynthesis; betaine biosynthesis via choline pathway; betaine aldehyde from choline (monooxygenase route): step 1/1. Its function is as follows. Catalyzes the first step of the osmoprotectant glycine betaine synthesis. The chain is Choline monooxygenase, chloroplastic from Arabidopsis thaliana (Mouse-ear cress).